The sequence spans 378 residues: MDQSDKNPNRRLRVIPKWSELCPDLLRSIFEQLSFTNLNRAKLVCRSWNSASRGCVPKRNQIPWMILFPQKSENNSSNNCVLFVPDDNDKVYKTRDLGVDFAQSICLATYGSWLLMFNHLRNLYILNPLTLERIDLPHSTSINPNMCYPNFKYYRSACLWINNITKDYLVVWPIYNKCFFTKKGDDTWRFAPACHIRMKDQIIYNHKDHKVYQYASYGFIYVWDFSSDIPHVDKHLPAVSFISGREIGDKNKYYRISHQMVMSLSGEVVVVKIMHYYDLSRWRFRIFELNPLTQRWVKVDSLGDAAIILDMGITVVAKDIPGIKKNSIYFSGLNHPLTDPECRFVYDLTTGTMEPLPQCVLSSMLFSDSRWFLPGFTS.

Residues 16–63 (PKWSELCPDLLRSIFEQLSFTNLNRAKLVCRSWNSASRGCVPKRNQIP) enclose the F-box domain.

The chain is Putative F-box protein At4g17565 from Arabidopsis thaliana (Mouse-ear cress).